A 166-amino-acid polypeptide reads, in one-letter code: Large ribosomal subunit protein uL10 (166 aa).

The protein belongs to the universal ribosomal protein uL10 family. In terms of assembly, part of the ribosomal stalk of the 50S ribosomal subunit. The N-terminus interacts with L11 and the large rRNA to form the base of the stalk. The C-terminus forms an elongated spine to which L12 dimers bind in a sequential fashion forming a multimeric L10(L12)X complex.

Its function is as follows. Forms part of the ribosomal stalk, playing a central role in the interaction of the ribosome with GTP-bound translation factors. This is Large ribosomal subunit protein uL10 from Bacillus licheniformis (strain ATCC 14580 / DSM 13 / JCM 2505 / CCUG 7422 / NBRC 12200 / NCIMB 9375 / NCTC 10341 / NRRL NRS-1264 / Gibson 46).